The chain runs to 220 residues: Adenylate kinase (220 aa).

Residue 10-15 (GAGKGT) participates in ATP binding. The interval 30–59 (STGDMLRAAVKAGSPLGVEAKGYMDAGKLV) is NMP. AMP-binding positions include Thr-31, Arg-36, 57 to 59 (KLV), 85 to 88 (GFPR), and Gln-92. The interval 122–159 (GRRTHAASGRTYHVKFNPPKVEGQDDVTGEPLIQRDDD) is LID. ATP is bound by residues Arg-123 and 132–133 (TY). The AMP site is built by Arg-156 and Arg-167. Gly-206 contributes to the ATP binding site.

This sequence belongs to the adenylate kinase family. As to quaternary structure, monomer.

It is found in the cytoplasm. The enzyme catalyses AMP + ATP = 2 ADP. Its pathway is purine metabolism; AMP biosynthesis via salvage pathway; AMP from ADP: step 1/1. Catalyzes the reversible transfer of the terminal phosphate group between ATP and AMP. Plays an important role in cellular energy homeostasis and in adenine nucleotide metabolism. The polypeptide is Adenylate kinase (Burkholderia vietnamiensis (strain G4 / LMG 22486) (Burkholderia cepacia (strain R1808))).